A 318-amino-acid chain; its full sequence is MAKRRKGRQVNGVLLLDKPHGLSSNHALQTVKRIYFAQKAGHTGALDPLATGMLPICLGEGTKFSQYLLDTDKTYQVTAKLGIRTTTSDAGGEVVSEKTVDVSSEQLAKALDSFRGTTKQVPSMYSALKHQGQPLYKYAREGIEVPREARDITVFNLELLRFEHDEVELNIHVSKGTYIRTIVDDLGELLGCGAHVAHLRRSAVGNYPVEKMITLPELEALLEQANADEITPSDVLDPLLLPMNSAVDGMHCVYVDDMSANFLRHGNPVQAYNQPEAGSVQVYLGEDENDADAEFIGVGFINDDGLVAPKRIVVLEQY.

The Nucleophile role is filled by Asp47.

Belongs to the pseudouridine synthase TruB family. Type 1 subfamily.

The catalysed reaction is uridine(55) in tRNA = pseudouridine(55) in tRNA. In terms of biological role, responsible for synthesis of pseudouridine from uracil-55 in the psi GC loop of transfer RNAs. The chain is tRNA pseudouridine synthase B from Colwellia psychrerythraea (strain 34H / ATCC BAA-681) (Vibrio psychroerythus).